Here is a 130-residue protein sequence, read N- to C-terminus: Small ribosomal subunit protein uS9 (130 aa).

The protein belongs to the universal ribosomal protein uS9 family.

This chain is Small ribosomal subunit protein uS9, found in Stutzerimonas stutzeri (strain A1501) (Pseudomonas stutzeri).